Here is a 317-residue protein sequence, read N- to C-terminus: Carbonic anhydrase 5B, mitochondrial (317 aa).

The transit peptide at 1–33 (MAVMNHLRVILQVSSSTLPWRRCWVPRLVPRRS) directs the protein to the mitochondrion. Residues 37–296 (YTCTYRTRNR…LMNRTVRSSF (260 aa)) form the Alpha-carbonic anhydrase domain. Zn(2+) contacts are provided by histidine 130, histidine 132, and histidine 155. 235–236 (TT) lines the substrate pocket.

Belongs to the alpha-carbonic anhydrase family. Zn(2+) serves as cofactor. Expressed in the heart, liver, lung, kidney, testis, and skeletal muscle (at protein level).

Its subcellular location is the mitochondrion. It carries out the reaction hydrogencarbonate + H(+) = CO2 + H2O. In terms of biological role, mitochondrial carbonic anhydrase that catalyzes the reversible conversion of carbon dioxide to bicarbonate/HCO3. The chain is Carbonic anhydrase 5B, mitochondrial (Ca5b) from Mus musculus (Mouse).